The primary structure comprises 535 residues: GMP synthase [glutamine-hydrolyzing] (535 aa).

The 194-residue stretch at 24–217 folds into the Glutamine amidotransferase type-1 domain; it reads KILIVDFGSQ…VRKVAGLTGD (194 aa). The Nucleophile role is filled by Cys101. Catalysis depends on residues His191 and Glu193. Residues 218 to 410 enclose the GMPS ATP-PPase domain; the sequence is WTMRAFREEA…LGLPEIFVGR (193 aa). 245-251 lines the ATP pocket; that stretch reads SGGVDSS.

As to quaternary structure, homodimer.

It carries out the reaction XMP + L-glutamine + ATP + H2O = GMP + L-glutamate + AMP + diphosphate + 2 H(+). Its pathway is purine metabolism; GMP biosynthesis; GMP from XMP (L-Gln route): step 1/1. Its function is as follows. Catalyzes the synthesis of GMP from XMP. The polypeptide is GMP synthase [glutamine-hydrolyzing] (Nitrobacter winogradskyi (strain ATCC 25391 / DSM 10237 / CIP 104748 / NCIMB 11846 / Nb-255)).